A 599-amino-acid polypeptide reads, in one-letter code: Elongation factor 4 (599 aa).

A tr-type G domain is found at 5–187; sequence KNIRNFSIIA…QLVERIPAPE (183 aa). Residues 17 to 22 and 134 to 137 contribute to the GTP site; these read DHGKST and NKID.

This sequence belongs to the TRAFAC class translation factor GTPase superfamily. Classic translation factor GTPase family. LepA subfamily.

Its subcellular location is the cell inner membrane. It carries out the reaction GTP + H2O = GDP + phosphate + H(+). Functionally, required for accurate and efficient protein synthesis under certain stress conditions. May act as a fidelity factor of the translation reaction, by catalyzing a one-codon backward translocation of tRNAs on improperly translocated ribosomes. Back-translocation proceeds from a post-translocation (POST) complex to a pre-translocation (PRE) complex, thus giving elongation factor G a second chance to translocate the tRNAs correctly. Binds to ribosomes in a GTP-dependent manner. The chain is Elongation factor 4 from Alcanivorax borkumensis (strain ATCC 700651 / DSM 11573 / NCIMB 13689 / SK2).